The sequence spans 562 residues: MKSFKLNRVRYQNIMSVGGNPIDIQLDKVQKTLITGKNGGGKSTMLEAITFGLFGKPFRDVKKGQIINSTNKKELLVELWMEFDDKKYFIKRGQKPNIFEISVDGVRLDESASSRDFQEEFERSIGMSYASFKQIVVLGTAGYTPFMALSTPARRKLVEDLLEVGTLAEMDKINKSQVRELNSQGQVLDAKKDGVIQQIKIYNENIERQKKLSGDNVARLQNMYDDLAKEARSLKAEIEEANERLLNIVLDEDPTEAFNKIGQEAFLIKSKIDSYNKVIKMYHDGGTCPTCASQLHQGDPIVSKITDKLHECNHSFEQLTCHRDNLSVLVDEYRANVKTKQDLASDIRTKKQAMIATIDKAKKVKAAIEQASAEFIDHADEIALLQKELDKIIKTKSDIVLEKYHRGIITDMLKDSGIKGAIIKKYVPLFNKQINHYLKIMEADYVFSIDEEFNESIKSRGREEFSYASFSQGEKARIDIALLFTWRDIAEKVSGVRINTLIMDEVMDSATDSEGIKAISTILNSLTDANVFIISHRDHDPQAYGQHLQMSKVGRFTVMTVS.

36-43 (GKNGGGKS) lines the ATP pocket.

This sequence to phage T5 protein D13 and to yeast RAD52. Consists of two subunits: Gp47 and Gp46.

Exonuclease involved in phage DNA recombination, replication, and repair. This is Exonuclease subunit 2 (46) from Escherichia phage RB69 (Bacteriophage RB69).